We begin with the raw amino-acid sequence, 214 residues long: MTKLFEPAGCRVDLRTGAMSDATGAYQKRFRDLAGLYADEAAFSAMQETWNDTVVYEVSEFRPNERTGDLIFGVTRMLPGKVGEEYFVTRGHIHKQSDRPEIYYGQKGRGLMLLESPEGEVRVVAVDAQTVCYVPPYWIHRSVNIGGDELVMLFCYPADSGQDYDCIAKAGGMRARIIDDGRGGWKQIDNPNWRMRDAATVAALYGREKKEENA.

The Fe cation site is built by His-92, His-94, Glu-101, and His-140.

It belongs to the archaeal-type GPI family. As to quaternary structure, homodimer. It depends on Fe cation as a cofactor.

Its subcellular location is the cytoplasm. The enzyme catalyses alpha-D-glucose 6-phosphate = beta-D-fructose 6-phosphate. The protein operates within carbohydrate degradation; glycolysis; D-glyceraldehyde 3-phosphate and glycerone phosphate from D-glucose: step 2/4. The sequence is that of Putative glucose-6-phosphate isomerase 1 (pgiA1) from Rhizobium meliloti (strain 1021) (Ensifer meliloti).